A 92-amino-acid chain; its full sequence is Defensin-like protein 249 (92 aa).

Residues 1–24 (MKLAAIFLASSVLLSLLPIHLSQG) form the signal peptide. 4 cysteine pairs are disulfide-bonded: Cys34–Cys91, Cys45–Cys74, Cys53–Cys84, and Cys72–Cys86.

The protein belongs to the DEFL family.

The protein localises to the secreted. The polypeptide is Defensin-like protein 249 (SCRL7) (Arabidopsis thaliana (Mouse-ear cress)).